We begin with the raw amino-acid sequence, 143 residues long: Large ribosomal subunit protein eL28y (143 aa).

This sequence belongs to the eukaryotic ribosomal protein eL28 family.

In Arabidopsis thaliana (Mouse-ear cress), this protein is Large ribosomal subunit protein eL28y (RPL28C).